The chain runs to 225 residues: 3-dehydroquinate dehydratase (225 aa).

3-dehydroquinate contacts are provided by residues 30–32 and arginine 62; that span reads EWR. Histidine 118 acts as the Proton donor/acceptor in catalysis. Catalysis depends on lysine 143, which acts as the Schiff-base intermediate with substrate. The 3-dehydroquinate site is built by arginine 186 and glutamine 209.

The protein belongs to the type-I 3-dehydroquinase family. In terms of assembly, homodimer.

It catalyses the reaction 3-dehydroquinate = 3-dehydroshikimate + H2O. The protein operates within metabolic intermediate biosynthesis; chorismate biosynthesis; chorismate from D-erythrose 4-phosphate and phosphoenolpyruvate: step 3/7. Involved in the third step of the chorismate pathway, which leads to the biosynthesis of aromatic amino acids. Catalyzes the cis-dehydration of 3-dehydroquinate (DHQ) and introduces the first double bond of the aromatic ring to yield 3-dehydroshikimate. In Streptococcus agalactiae serotype Ia (strain ATCC 27591 / A909 / CDC SS700), this protein is 3-dehydroquinate dehydratase.